The sequence spans 478 residues: Abscisate beta-glucosyltransferase (478 aa).

The active-site Proton acceptor is the H20. An anthocyanidin is bound at residue H20. D108 (charge relay) is an active-site residue. 7 residues coordinate UDP-alpha-D-glucose: A340, Q342, H357, W360, N361, S362, and E365. Position 380 (A380) interacts with an anthocyanidin. E381 and Q382 together coordinate UDP-alpha-D-glucose.

It belongs to the UDP-glycosyltransferase family.

It catalyses the reaction 2-cis-(+)-abscisate + UDP-alpha-D-glucose = beta-D-glucopyranosyl cis-(+)-abscisate + UDP. Glucosyltransferase involved in the catabolism of abscisic acid (ABA). Adds a glucosyl group at the C-1 position of ABA; (S)-2-trans-abscisate is a better substrate than the natural (+)-S-abscisate or its enantiomer (-)-R-abscisate. No activity with (-)-phaseic acid (PA), methylated-ABA or with other hormones such as jasmonate, zeatin, auxin (IAA) or gibberellin A3 (GA3). In Phaseolus angularis (Azuki bean), this protein is Abscisate beta-glucosyltransferase (AOG).